Consider the following 512-residue polypeptide: 2,3-bisphosphoglycerate-independent phosphoglycerate mutase (512 aa).

Mn(2+) is bound by residues Asp-12 and Ser-62. The active-site Phosphoserine intermediate is Ser-62. Residues His-123, 153–154, Arg-185, Arg-191, 260–263, and Lys-333 each bind substrate; these read RD and RPDR. Asp-400, His-404, Asp-441, His-442, and His-460 together coordinate Mn(2+).

It belongs to the BPG-independent phosphoglycerate mutase family. As to quaternary structure, monomer. The cofactor is Mn(2+).

It catalyses the reaction (2R)-2-phosphoglycerate = (2R)-3-phosphoglycerate. It participates in carbohydrate degradation; glycolysis; pyruvate from D-glyceraldehyde 3-phosphate: step 3/5. Functionally, catalyzes the interconversion of 2-phosphoglycerate and 3-phosphoglycerate. The protein is 2,3-bisphosphoglycerate-independent phosphoglycerate mutase of Clostridium perfringens (strain ATCC 13124 / DSM 756 / JCM 1290 / NCIMB 6125 / NCTC 8237 / Type A).